The sequence spans 140 residues: Large ribosomal subunit protein uL13 (140 aa).

This sequence belongs to the universal ribosomal protein uL13 family. Part of the 50S ribosomal subunit.

This protein is one of the early assembly proteins of the 50S ribosomal subunit, although it is not seen to bind rRNA by itself. It is important during the early stages of 50S assembly. This Methanosarcina barkeri (strain Fusaro / DSM 804) protein is Large ribosomal subunit protein uL13.